We begin with the raw amino-acid sequence, 305 residues long: Glutaminase (305 aa).

Substrate-binding residues include Ser-61, Asn-113, Glu-158, Asn-165, Tyr-189, Tyr-241, and Val-259.

It belongs to the glutaminase family. As to quaternary structure, homotetramer.

The enzyme catalyses L-glutamine + H2O = L-glutamate + NH4(+). The protein is Glutaminase of Clostridium botulinum (strain 657 / Type Ba4).